The sequence spans 956 residues: Plasma membrane ATPase 3 (956 aa).

Topologically, residues 1–65 (MGEKPEVLDA…EKKESKFSKF (65 aa)) are cytoplasmic. Residues 66–85 (LGFMWNPLSWVMEAAAIMAI) form a helical membrane-spanning segment. Residues 86–97 (ALANGGGKPPDW) are Extracellular-facing. A helical transmembrane segment spans residues 98–118 (QDFVGIITLLIINSTISFIEE). At 119–247 (NNAGNAAAAL…GHFQKVLTAI (129 aa)) the chain is on the cytoplasmic side. Residues 248 to 268 (GNFCICSIAVGMIIEIIVMYP) traverse the membrane as a helical segment. Residues 269-278 (IQHRKYRPGI) are Extracellular-facing. A helical transmembrane segment spans residues 279–300 (DNLLVLLIGGIPIAMPTVLSVT). Residues 301–647 (MAIGSHRLAQ…TSRAIFQRMK (347 aa)) lie on the Cytoplasmic side of the membrane. D333 serves as the catalytic 4-aspartylphosphate intermediate. Mg(2+)-binding residues include D592 and D596. The helical transmembrane segment at 648–669 (NYTIYAVSITIRIVLGFMLLAL) threads the bilayer. At 670-674 (IWQFD) the chain is on the extracellular side. A helical membrane pass occupies residues 675-697 (FPPFMVLIIAILNDGTIMTISKD). Residues 698 to 713 (RVKPSPLPDSWKLAEI) lie on the Cytoplasmic side of the membrane. The chain crosses the membrane as a helical span at residues 714–734 (FTTGVVLGGYLAMMTVIFFWA). Over 735-759 (AYKTNFFPRVFGVSTLEKTATDDFR) the chain is Extracellular. A helical membrane pass occupies residues 760–780 (KLASAIYLQVSTISQALIFVT). The Cytoplasmic segment spans residues 781-792 (RSRSWSFMERPG). A helical transmembrane segment spans residues 793 to 813 (LLLVVAFFIAQLVATLIAVYA). The Extracellular portion of the chain corresponds to 814-822 (NWSFAAIEG). Residues 823–843 (IGWGWAGVIWLYNIVFYIPLD) form a helical membrane-spanning segment. The Cytoplasmic portion of the chain corresponds to 844-956 (LXXFLIRYAL…IETIQQAYTV (113 aa)).

The protein belongs to the cation transport ATPase (P-type) (TC 3.A.3) family. Type IIIA subfamily. In terms of tissue distribution, expressed in roots, stems, leaves from both vegetative and flowering plants, and flowers at early and late stages of development with highest expression levels found in flowers and root tissue.

The protein localises to the cell membrane. The catalysed reaction is ATP + H2O + H(+)(in) = ADP + phosphate + 2 H(+)(out). Functionally, the plasma membrane ATPase of plants and fungi is a hydrogen ion pump. The proton gradient it generates drives the active transport of nutrients by H(+)-symport. The resulting external acidification and/or internal alkinization may mediate growth responses. This chain is Plasma membrane ATPase 3 (PMA3), found in Nicotiana plumbaginifolia (Leadwort-leaved tobacco).